The chain runs to 377 residues: Actin-related protein T2 (377 aa).

Belongs to the actin family.

The protein localises to the cytoplasm. Its subcellular location is the cytoskeleton. The chain is Actin-related protein T2 (ACTRT2) from Macaca fascicularis (Crab-eating macaque).